The chain runs to 389 residues: Tyrosine aminotransferase (389 aa).

An N6-(pyridoxal phosphate)lysine modification is found at lysine 242.

This sequence belongs to the class-I pyridoxal-phosphate-dependent aminotransferase family. Homodimer. Pyridoxal 5'-phosphate is required as a cofactor.

It carries out the reaction L-tyrosine + 2-oxoglutarate = 3-(4-hydroxyphenyl)pyruvate + L-glutamate. Its pathway is amino-acid degradation; L-phenylalanine degradation; acetoacetate and fumarate from L-phenylalanine: step 2/6. Transaminase involved in tyrosine breakdown. Converts tyrosine to p-hydroxyphenylpyruvate. The polypeptide is Tyrosine aminotransferase (tatA) (Rhizobium meliloti (strain 1021) (Ensifer meliloti)).